The primary structure comprises 190 residues: dTTP/UTP pyrophosphatase (190 aa).

Residue D71 is the Proton acceptor of the active site.

The protein belongs to the Maf family. YhdE subfamily. A divalent metal cation serves as cofactor.

The protein localises to the cytoplasm. The catalysed reaction is dTTP + H2O = dTMP + diphosphate + H(+). It catalyses the reaction UTP + H2O = UMP + diphosphate + H(+). Nucleoside triphosphate pyrophosphatase that hydrolyzes dTTP and UTP. May have a dual role in cell division arrest and in preventing the incorporation of modified nucleotides into cellular nucleic acids. This chain is dTTP/UTP pyrophosphatase, found in Xanthomonas axonopodis pv. citri (strain 306).